The primary structure comprises 266 residues: Interleukin-33 (266 aa).

Residues 1–67 (MRPRMKYSNS…ETSYFRKEPT (67 aa)) form a homeodomain-like HTH domain region. Positions 1 to 101 (MRPRMKYSNS…RSLLGSIQAF (101 aa)) are excised as a propeptide. An interaction with RELA region spans residues 66–108 (PTKRYSLKSGTKHEENFSAYPRDSRKRSLLGSIQAFAASVDTL).

The protein belongs to the IL-1 family. Highly divergent. In terms of assembly, (Microbial infection) Interacts (in reduced form) with H.polygyrus ARI; the interaction abolishes the interaction with its primary receptor IL1RL1. As to quaternary structure, forms a 1:1:1 heterotrimeric complex with its primary high-affinity receptor IL1RL1 and the coreceptor IL1RAP. Interacts with cargo receptor TMED10; the interaction mediates the translocation from the cytoplasm into the ERGIC (endoplasmic reticulum-Golgi intermediate compartment) and thereby secretion. The full-length protein can be released from cells and is able to signal via the IL1RL1/ST2 receptor. However, proteolytic processing by CELA1, CSTG/cathepsin G and ELANE/neutrophil elastase produces C-terminal peptides that are more active than the unprocessed full-length protein. May also be proteolytically processed by calpains. Proteolytic cleavage mediated by apoptotic caspases including CASP3 and CASP7 results in IL33 inactivation. In vitro proteolytic cleavage by CASP1 was reported but could not be confirmed in vivo suggesting that IL33 is probably not a direct substrate for that caspase.

It localises to the nucleus. The protein resides in the chromosome. Its subcellular location is the cytoplasm. It is found in the cytoplasmic vesicle. The protein localises to the secretory vesicle. It localises to the secreted. Functionally, cytokine that binds to and signals through the IL1RL1/ST2 receptor which in turn activates NF-kappa-B and MAPK signaling pathways in target cells. Involved in the maturation of Th2 cells inducing the secretion of T-helper type 2-associated cytokines. Also involved in activation of mast cells, basophils, eosinophils and natural killer cells. Acts as an enhancer of polarization of alternatively activated macrophages. Acts as a chemoattractant for Th2 cells, and may function as an 'alarmin', that amplifies immune responses during tissue injury. Induces rapid UCP2-dependent mitochondrial rewiring that attenuates the generation of reactive oxygen species and preserves the integrity of Krebs cycle required for persistent production of itaconate and subsequent GATA3-dependent differentiation of inflammation-resolving alternatively activated macrophages. In quiescent endothelia the uncleaved form is constitutively and abundantly expressed, and acts as a chromatin-associated nuclear factor with transcriptional repressor properties, it may sequester nuclear NF-kappaB/RELA, lowering expression of its targets. This form is rapidely lost upon angiogenic or pro-inflammatory activation. The protein is Interleukin-33 of Mus musculus (Mouse).